The primary structure comprises 264 residues: MKPTTIASLQKCKQDKKRFATITAYDYSFAKLFADEGLNVMLVGDSLGMTVQGHDSTLPVTVEDIAYHTAAVRRGAPNCLLLADLPFMAYATPEQAFENAATVMRAGANMVKIEGGEWLVETVKMLTERAVPVCGHLGLTPQSVNIFGGYKVQGRGDEAGDQLLSDALALEAAGAQLLVLECVPVELAKRITDALAIPVIGIGAGNVTDGQILVMHDAFGITGGHIPKFAKNFLAETGDIRAAVRQYMAEVESGVYPGEEHSFH.

Mg(2+) contacts are provided by aspartate 45 and aspartate 84. 3-methyl-2-oxobutanoate-binding positions include aspartate 45–serine 46, aspartate 84, and lysine 112. Residue glutamate 114 coordinates Mg(2+). Glutamate 181 acts as the Proton acceptor in catalysis.

The protein belongs to the PanB family. In terms of assembly, homodecamer; pentamer of dimers. Mg(2+) serves as cofactor.

The protein resides in the cytoplasm. It catalyses the reaction 3-methyl-2-oxobutanoate + (6R)-5,10-methylene-5,6,7,8-tetrahydrofolate + H2O = 2-dehydropantoate + (6S)-5,6,7,8-tetrahydrofolate. It functions in the pathway cofactor biosynthesis; (R)-pantothenate biosynthesis; (R)-pantoate from 3-methyl-2-oxobutanoate: step 1/2. In terms of biological role, catalyzes the reversible reaction in which hydroxymethyl group from 5,10-methylenetetrahydrofolate is transferred onto alpha-ketoisovalerate to form ketopantoate. This chain is 3-methyl-2-oxobutanoate hydroxymethyltransferase, found in Escherichia coli O8 (strain IAI1).